The chain runs to 473 residues: Digalactosyldiacylglycerol synthase 2, chloroplastic (473 aa).

Interaction with the membrane lipid bilayer regions lie at residues 130-148 and 227-245; these read LTWF…YVIG and QPFT…SKGY.

Belongs to the glycosyltransferase group 1 family. Glycosyltransferase 4 subfamily. In terms of tissue distribution, expressed in leaves, flowers and roots, but not in stems and siliques.

It is found in the plastid. Its subcellular location is the chloroplast outer membrane. It catalyses the reaction a 1,2-diacyl-3-O-(beta-D-galactosyl)-sn-glycerol + UDP-alpha-D-galactose = a 1,2-diacyl-3-O-[alpha-D-galactosyl-(1-&gt;6)-beta-D-galactosyl]-sn-glycerol + UDP + H(+). With respect to regulation, stimulated by anionic phospholipids. Functionally, involved in the synthesis of diacylglycerol galactolipids that are specifically found in thylakoid membranes. Specific for alpha-glycosidic linkages. During phosphate shortage, involved in the biosynthesis of digalactosyldiacylglycerol (DGDG) which rescues the limitation of phospholipids. The sequence is that of Digalactosyldiacylglycerol synthase 2, chloroplastic from Arabidopsis thaliana (Mouse-ear cress).